We begin with the raw amino-acid sequence, 509 residues long: ATP synthase subunit alpha (509 aa).

169 to 176 (GDRQTGKT) is an ATP binding site.

It belongs to the ATPase alpha/beta chains family. As to quaternary structure, F-type ATPases have 2 components, CF(1) - the catalytic core - and CF(0) - the membrane proton channel. CF(1) has five subunits: alpha(3), beta(3), gamma(1), delta(1), epsilon(1). CF(0) has four main subunits: a(1), b(1), b'(1) and c(9-12).

It is found in the cellular chromatophore membrane. The catalysed reaction is ATP + H2O + 4 H(+)(in) = ADP + phosphate + 5 H(+)(out). In terms of biological role, produces ATP from ADP in the presence of a proton gradient across the membrane. The alpha chain is a regulatory subunit. The protein is ATP synthase subunit alpha of Rhodobacter capsulatus (Rhodopseudomonas capsulata).